Reading from the N-terminus, the 426-residue chain is Glutamate-1-semialdehyde 2,1-aminomutase (426 aa).

Lys265 carries the post-translational modification N6-(pyridoxal phosphate)lysine.

Belongs to the class-III pyridoxal-phosphate-dependent aminotransferase family. HemL subfamily. Homodimer. Pyridoxal 5'-phosphate serves as cofactor.

The protein localises to the cytoplasm. It catalyses the reaction (S)-4-amino-5-oxopentanoate = 5-aminolevulinate. Its pathway is porphyrin-containing compound metabolism; protoporphyrin-IX biosynthesis; 5-aminolevulinate from L-glutamyl-tRNA(Glu): step 2/2. The chain is Glutamate-1-semialdehyde 2,1-aminomutase from Actinobacillus pleuropneumoniae serotype 5b (strain L20).